The chain runs to 362 residues: Glutamate 5-kinase (362 aa).

Lysine 3 contributes to the ATP binding site. Positions 43, 128, and 140 each coordinate substrate. Residues threonine 160–aspartate 161 and threonine 202–lysine 208 each bind ATP. The PUA domain occupies proline 267 to serine 348.

This sequence belongs to the glutamate 5-kinase family.

Its subcellular location is the cytoplasm. It catalyses the reaction L-glutamate + ATP = L-glutamyl 5-phosphate + ADP. It functions in the pathway amino-acid biosynthesis; L-proline biosynthesis; L-glutamate 5-semialdehyde from L-glutamate: step 1/2. Its function is as follows. Catalyzes the transfer of a phosphate group to glutamate to form L-glutamate 5-phosphate. This is Glutamate 5-kinase from Xanthomonas campestris pv. campestris (strain 8004).